Reading from the N-terminus, the 234-residue chain is Sugar fermentation stimulation protein homolog (234 aa).

Belongs to the SfsA family.

The sequence is that of Sugar fermentation stimulation protein homolog from Shewanella loihica (strain ATCC BAA-1088 / PV-4).